Here is a 282-residue protein sequence, read N- to C-terminus: S-formylglutathione hydrolase (282 aa).

Alanine 2 carries the N-acetylalanine modification. Position 4 is an N6-succinyllysine (lysine 4). The active-site Charge relay system is the serine 149. The residue at position 200 (lysine 200) is an N6-acetyllysine. Residues aspartate 226 and histidine 260 each act as charge relay system in the active site.

This sequence belongs to the esterase D family. As to quaternary structure, homodimer.

The protein resides in the cytoplasm. The protein localises to the cytoplasmic vesicle. It catalyses the reaction S-formylglutathione + H2O = formate + glutathione + H(+). Serine hydrolase involved in the detoxification of formaldehyde. The protein is S-formylglutathione hydrolase (Esd) of Mus musculus (Mouse).